Here is a 119-residue protein sequence, read N- to C-terminus: Large ribosomal subunit protein uL18 (119 aa).

This sequence belongs to the universal ribosomal protein uL18 family. Part of the 50S ribosomal subunit; part of the 5S rRNA/L5/L18/L25 subcomplex. Contacts the 5S and 23S rRNAs.

Its function is as follows. This is one of the proteins that bind and probably mediate the attachment of the 5S RNA into the large ribosomal subunit, where it forms part of the central protuberance. In Lactobacillus johnsonii (strain CNCM I-12250 / La1 / NCC 533), this protein is Large ribosomal subunit protein uL18.